The following is a 311-amino-acid chain: Aspartate carbamoyltransferase catalytic subunit (311 aa).

Arginine 58 and threonine 59 together coordinate carbamoyl phosphate. L-aspartate is bound at residue lysine 86. Residues arginine 108, histidine 136, and glutamine 139 each contribute to the carbamoyl phosphate site. L-aspartate-binding residues include arginine 169 and arginine 223. Residues glycine 264 and proline 265 each coordinate carbamoyl phosphate.

Belongs to the aspartate/ornithine carbamoyltransferase superfamily. ATCase family. In terms of assembly, heterododecamer (2C3:3R2) of six catalytic PyrB chains organized as two trimers (C3), and six regulatory PyrI chains organized as three dimers (R2).

The catalysed reaction is carbamoyl phosphate + L-aspartate = N-carbamoyl-L-aspartate + phosphate + H(+). Its pathway is pyrimidine metabolism; UMP biosynthesis via de novo pathway; (S)-dihydroorotate from bicarbonate: step 2/3. Catalyzes the condensation of carbamoyl phosphate and aspartate to form carbamoyl aspartate and inorganic phosphate, the committed step in the de novo pyrimidine nucleotide biosynthesis pathway. This Acidiphilium cryptum (strain JF-5) protein is Aspartate carbamoyltransferase catalytic subunit.